The following is a 415-amino-acid chain: MADQQPEKTTAPATDVADSQPAVVTSTDTRKETTETAEPLPEDKTETTTAQPAVETTATQSGTAETPAEVQQPPQAEEEKPVAQQPEQPAYLAKNPALAQFFERLPAIVSSSGHAEMWGVPLKDSNDAPTVNVLIKFLRANEGNVKLAEGQLTKALKWRKEMNPSALAESTSYSATKFGGLGYLTVYKEANGAENVVTWNIYGGVKDINTTFGDMDEFVKWRVALMELAVKELKMAEATSVIDYDGEDPYQMIQVHDYQNVSFLRLNPAIKAATKKTIEVFTTAYPELLREKFFVNVPAIMGWMFAAMKVFLSKNTTRKFHPISNGANLAREFPSLKDQFPKVYGGSAPALQEGARTVNLSQDESAPAAPEQSKEQTKENKEEAAQEESKPESAPEQPKADPAVTAQEAPAADAK.

The disordered stretch occupies residues 1 to 87 (MADQQPEKTT…EEKPVAQQPE (87 aa)). Over residues 47 to 63 (TTTAQPAVETTATQSGT) the composition is skewed to polar residues. Residues 64–75 (AETPAEVQQPPQ) are compositionally biased toward low complexity. The CRAL-TRIO domain occupies 177-352 (KFGGLGYLTV…VYGGSAPALQ (176 aa)). The heme site is built by Tyr-202, Arg-222, His-256, Tyr-258, and Lys-292. The segment at 358–415 (VNLSQDESAPAAPEQSKEQTKENKEEAAQEESKPESAPEQPKADPAVTAQEAPAADAK) is disordered. Residues 372–393 (QSKEQTKENKEEAAQEESKPES) are compositionally biased toward basic and acidic residues.

It belongs to the SFH5 family. It depends on heme b as a cofactor.

The protein resides in the cytoplasm. It localises to the endoplasmic reticulum membrane. It is found in the microsome membrane. It carries out the reaction a 1,2-diacyl-sn-glycero-3-phospho-(1D-myo-inositol)(in) = a 1,2-diacyl-sn-glycero-3-phospho-(1D-myo-inositol)(out). Its function is as follows. Non-classical phosphatidylinositol (PtdIns) transfer protein (PITP), which exhibits PtdIns-binding/transfer activity in the absence of detectable PtdCho-binding/transfer activity. Regulates PtdIns(4,5)P2 homeostasis at the plasma membrane. Heme-binding protein that may play a role in organic oxidant-induced stress responses. The polypeptide is Phosphatidylinositol transfer protein sfh5 (sfh5) (Neosartorya fischeri (strain ATCC 1020 / DSM 3700 / CBS 544.65 / FGSC A1164 / JCM 1740 / NRRL 181 / WB 181) (Aspergillus fischerianus)).